Consider the following 394-residue polypeptide: 1-deoxy-D-xylulose 5-phosphate reductoisomerase (394 aa).

6 residues coordinate NADPH: threonine 28, glycine 29, serine 30, isoleucine 31, asparagine 57, and asparagine 133. Residue lysine 134 participates in 1-deoxy-D-xylulose 5-phosphate binding. Glutamate 135 is a binding site for NADPH. Aspartate 157 lines the Mn(2+) pocket. Positions 158, 159, 183, and 206 each coordinate 1-deoxy-D-xylulose 5-phosphate. Glutamate 159 provides a ligand contact to Mn(2+). Glycine 212 lines the NADPH pocket. 1-deoxy-D-xylulose 5-phosphate-binding residues include serine 219, asparagine 224, lysine 225, and glutamate 228. Glutamate 228 is a Mn(2+) binding site.

It belongs to the DXR family. The cofactor is Mg(2+). Requires Mn(2+) as cofactor.

It catalyses the reaction 2-C-methyl-D-erythritol 4-phosphate + NADP(+) = 1-deoxy-D-xylulose 5-phosphate + NADPH + H(+). It functions in the pathway isoprenoid biosynthesis; isopentenyl diphosphate biosynthesis via DXP pathway; isopentenyl diphosphate from 1-deoxy-D-xylulose 5-phosphate: step 1/6. In terms of biological role, catalyzes the NADPH-dependent rearrangement and reduction of 1-deoxy-D-xylulose-5-phosphate (DXP) to 2-C-methyl-D-erythritol 4-phosphate (MEP). This Nocardia farcinica (strain IFM 10152) protein is 1-deoxy-D-xylulose 5-phosphate reductoisomerase.